Consider the following 391-residue polypeptide: DNA-directed RNA polymerase subunit Rpo1C (391 aa).

This sequence belongs to the RNA polymerase beta' chain family. Part of the RNA polymerase complex.

Its subcellular location is the cytoplasm. The enzyme catalyses RNA(n) + a ribonucleoside 5'-triphosphate = RNA(n+1) + diphosphate. In terms of biological role, DNA-dependent RNA polymerase (RNAP) catalyzes the transcription of DNA into RNA using the four ribonucleoside triphosphates as substrates. Forms part of the jaw domain. This Thermococcus gammatolerans (strain DSM 15229 / JCM 11827 / EJ3) protein is DNA-directed RNA polymerase subunit Rpo1C.